The primary structure comprises 646 residues: ATP-dependent zinc metalloprotease FtsH (646 aa).

Positions 1-27 are disordered; sequence MTNNQTDRPRPPGPESRRFDNNDKNNR. The Cytoplasmic segment spans residues 1–35; it reads MTNNQTDRPRPPGPESRRFDNNDKNNRNRWGPIPS. Over residues 7 to 26 the composition is skewed to basic and acidic residues; it reads DRPRPPGPESRRFDNNDKNN. Residues 36–56 form a helical membrane-spanning segment; the sequence is WAWIVLIVALLLNWLVAPILF. Residues 57-144 are Extracellular-facing; sequence PEGKGAVSIP…QPESSTRSLL (88 aa). A helical membrane pass occupies residues 145 to 165; sequence LSILISFGPTILFFLLFLWLI. The Cytoplasmic portion of the chain corresponds to 166 to 646; sequence SKAQSSQQGL…GLGEKQPEPA (481 aa). Residue 237–244 participates in ATP binding; it reads GPPGTGKT. Histidine 459 serves as a coordination point for Zn(2+). Glutamate 460 is an active-site residue. 2 residues coordinate Zn(2+): histidine 463 and aspartate 535.

This sequence in the central section; belongs to the AAA ATPase family. It in the C-terminal section; belongs to the peptidase M41 family. Homohexamer. It depends on Zn(2+) as a cofactor.

It localises to the cell membrane. Functionally, acts as a processive, ATP-dependent zinc metallopeptidase for both cytoplasmic and membrane proteins. Plays a role in the quality control of integral membrane proteins. The protein is ATP-dependent zinc metalloprotease FtsH of Thermobaculum terrenum (strain ATCC BAA-798 / CCMEE 7001 / YNP1).